The sequence spans 291 residues: Homoserine kinase (291 aa).

R80–A90 contacts ATP.

Belongs to the GHMP kinase family. Homoserine kinase subfamily.

Its subcellular location is the cytoplasm. It carries out the reaction L-homoserine + ATP = O-phospho-L-homoserine + ADP + H(+). It participates in amino-acid biosynthesis; L-threonine biosynthesis; L-threonine from L-aspartate: step 4/5. Catalyzes the ATP-dependent phosphorylation of L-homoserine to L-homoserine phosphate. The protein is Homoserine kinase of Natronomonas pharaonis (strain ATCC 35678 / DSM 2160 / CIP 103997 / JCM 8858 / NBRC 14720 / NCIMB 2260 / Gabara) (Halobacterium pharaonis).